A 294-amino-acid chain; its full sequence is Nucleotide-binding protein LVIS_0651 (294 aa).

Residue glycine 12–threonine 19 participates in ATP binding. A GTP-binding site is contributed by aspartate 62 to serine 65.

The protein belongs to the RapZ-like family.

Displays ATPase and GTPase activities. This Levilactobacillus brevis (strain ATCC 367 / BCRC 12310 / CIP 105137 / JCM 1170 / LMG 11437 / NCIMB 947 / NCTC 947) (Lactobacillus brevis) protein is Nucleotide-binding protein LVIS_0651.